The primary structure comprises 79 residues: Acyl carrier protein (79 aa).

In terms of domain architecture, Carrier spans Ser2–Lys77. Ser37 carries the post-translational modification O-(pantetheine 4'-phosphoryl)serine.

Belongs to the acyl carrier protein (ACP) family. In terms of processing, 4'-phosphopantetheine is transferred from CoA to a specific serine of apo-ACP by AcpS. This modification is essential for activity because fatty acids are bound in thioester linkage to the sulfhydryl of the prosthetic group.

Its subcellular location is the cytoplasm. It functions in the pathway lipid metabolism; fatty acid biosynthesis. Functionally, carrier of the growing fatty acid chain in fatty acid biosynthesis. This is Acyl carrier protein from Granulibacter bethesdensis (strain ATCC BAA-1260 / CGDNIH1).